Consider the following 275-residue polypeptide: Large ribosomal subunit protein uL2c (275 aa).

Residues 219-267 are disordered; the sequence is TVRGSVMNPCDHPHGGGEGRTPIGRTRPLTPWGKPALGKKTRKTKKLSS. Over residues 255–264 the composition is skewed to basic residues; the sequence is LGKKTRKTKK.

It belongs to the universal ribosomal protein uL2 family. Part of the 50S ribosomal subunit.

Its subcellular location is the plastid. The protein localises to the chloroplast. The polypeptide is Large ribosomal subunit protein uL2c (rpl2) (Thalassiosira pseudonana (Marine diatom)).